Consider the following 322-residue polypeptide: Acetylglutamate kinase (322 aa).

Substrate is bound by residues 89-90 (GG), Arg-111, and Asn-217.

The protein belongs to the acetylglutamate kinase family. ArgB subfamily.

Its subcellular location is the cytoplasm. It catalyses the reaction N-acetyl-L-glutamate + ATP = N-acetyl-L-glutamyl 5-phosphate + ADP. It participates in amino-acid biosynthesis; L-arginine biosynthesis; N(2)-acetyl-L-ornithine from L-glutamate: step 2/4. Catalyzes the ATP-dependent phosphorylation of N-acetyl-L-glutamate. The sequence is that of Acetylglutamate kinase from Ehrlichia ruminantium (strain Welgevonden).